Here is a 401-residue protein sequence, read N- to C-terminus: Tumor necrosis factor receptor superfamily member 11B (401 aa).

Positions M1 to Q21 are cleaved as a signal peptide. 4 TNFR-Cys repeats span residues F24–C62, C65–C105, C107–C142, and C145–C185. Cystine bridges form between C41-C54, C44-C62, C65-C80, C83-C97, C87-C105, C107-C118, C124-C142, and C145-C160. The N-linked (GlcNAc...) asparagine glycan is linked to N98. Residues N152, N165, and N178 are each glycosylated (N-linked (GlcNAc...) asparagine). Residues C166 and C185 are joined by a disulfide bond. Death domains follow at residues D198–K269 and I270–L365. N-linked (GlcNAc...) asparagine glycosylation is present at N289.

Homodimer. Interacts with TNFSF10 and TNFSF11. In terms of processing, N-glycosylated. Contains sialic acid residues. Post-translationally, the N-terminus is blocked. Highly expressed in adult lung, heart, kidney, liver, spleen, thymus, prostate, ovary, small intestine, thyroid, lymph node, trachea, adrenal gland, testis, and bone marrow. Detected at very low levels in brain, placenta and skeletal muscle. Highly expressed in fetal kidney, liver and lung.

The protein localises to the secreted. Its function is as follows. Acts as a decoy receptor for TNFSF11/RANKL and thereby neutralizes its function in osteoclastogenesis. Inhibits the activation of osteoclasts and promotes osteoclast apoptosis in vitro. Bone homeostasis seems to depend on the local ratio between TNFSF11 and TNFRSF11B. May also play a role in preventing arterial calcification. May act as decoy receptor for TNFSF10/TRAIL and protect against apoptosis. TNFSF10/TRAIL binding blocks the inhibition of osteoclastogenesis. This is Tumor necrosis factor receptor superfamily member 11B (TNFRSF11B) from Homo sapiens (Human).